We begin with the raw amino-acid sequence, 159 residues long: 2-C-methyl-D-erythritol 2,4-cyclodiphosphate synthase (159 aa).

The a divalent metal cation site is built by Asp-10 and His-12. 4-CDP-2-C-methyl-D-erythritol 2-phosphate-binding positions include 10-12 and 37-38; these read DVH and HS. His-45 is a binding site for a divalent metal cation. Residues 59–61, 64–68, 103–109, 135–138, Phe-142, and Arg-145 contribute to the 4-CDP-2-C-methyl-D-erythritol 2-phosphate site; these read DIG, FLDTD, AQAPKML, and TTTE.

It belongs to the IspF family. As to quaternary structure, homotrimer. The cofactor is a divalent metal cation.

The enzyme catalyses 4-CDP-2-C-methyl-D-erythritol 2-phosphate = 2-C-methyl-D-erythritol 2,4-cyclic diphosphate + CMP. Its pathway is isoprenoid biosynthesis; isopentenyl diphosphate biosynthesis via DXP pathway; isopentenyl diphosphate from 1-deoxy-D-xylulose 5-phosphate: step 4/6. Functionally, involved in the biosynthesis of isopentenyl diphosphate (IPP) and dimethylallyl diphosphate (DMAPP), two major building blocks of isoprenoid compounds. Catalyzes the conversion of 4-diphosphocytidyl-2-C-methyl-D-erythritol 2-phosphate (CDP-ME2P) to 2-C-methyl-D-erythritol 2,4-cyclodiphosphate (ME-CPP) with a corresponding release of cytidine 5-monophosphate (CMP). The chain is 2-C-methyl-D-erythritol 2,4-cyclodiphosphate synthase from Francisella tularensis subsp. holarctica (strain OSU18).